Consider the following 415-residue polypeptide: Cyclin-A2 (415 aa).

The protein belongs to the cyclin family. Cyclin AB subfamily. In terms of assembly, interacts with the CDK1 and CDK2 protein kinases to form serine/threonine kinase holoenzyme complexes. As to expression, ubiquitous.

Its subcellular location is the nucleus. The protein resides in the cytoplasm. Its function is as follows. Cyclin which controls both the G1/S and the G2/M transition phases of the cell cycle. Functions through the formation of specific serine/threonine kinase holoenzyme complexes with the cyclin-dependent protein kinases CDK1 and CDK2. The cyclin subunit confers the substrate specificity of these complexes and differentially interacts with and activates CDK1 and CDK2 throughout the cell cycle. The chain is Cyclin-A2 (ccna2) from Xenopus laevis (African clawed frog).